A 324-amino-acid polypeptide reads, in one-letter code: Membrane protein UL8 (324 aa).

The interval 36-138 (ILESIIYVSG…LWYNLTVKPK (103 aa)) is immunoglobulin V-like domain. Residues 278-298 (THYSWMLIIAIILIIFIIICL) traverse the membrane as a helical segment.

This sequence belongs to the RL11 family. Highly glycosylated.

It localises to the host cell membrane. Its function is as follows. Plays a role in the inhibition of pro-inflammatory cytokine production. This effect is mediated by the conserved Ig-like domain. The protein is Membrane protein UL8 (UL8) of Homo sapiens (Human).